The chain runs to 489 residues: MAEGKAGGAAGLFAKQMQKKFSRAQEKVLQKLGKTVETKDERFEQSASNFYQQQAEGHKLYKDLKNFLSAVKVMHESSKRVSETLQEVYSSDWDGHEDLKAIVGNNDLLWEDYEEKLADQALRTMENYVSQFSEIKERIAKRGRKLVDYDSARHHLEAVQNAKKKDDAKMAKAEEDFSKAQIVFEDLNQELLEELPILYNSRIGCYVTVFQNISNLRDVFYREMSKLNHNLYEVMSKLEKQHSNKVFVVKGLSSSSRRSLVISPPVQSCAASSPVSPVSPVSPVTSPTSPSATSEPESVSATGEELTSEAGGEDSCESQESLKDEEADEAQSETSSSLPACNGPTPAPASPAAEVGSQEEALSSSAQSPGRGQTGKDTPSPGDVVLRARASSEGAEQSKRAASIQRTSAPPSRPPPPRASGSGSCNAPGSPEGSSQLCSPRASPDASSNPEPAETREKEGAGSSGPEEPRAVSTKSATQASGGLVGLFL.

A BAR domain is found at 28-244; the sequence is VLQKLGKTVE…MSKLEKQHSN (217 aa). Positions 267-302 are enriched in low complexity; the sequence is QSCAASSPVSPVSPVSPVTSPTSPSATSEPESVSAT. A disordered region spans residues 267–489; that stretch reads QSCAASSPVS…ASGGLVGLFL (223 aa). Ser273 carries the post-translational modification Phosphoserine. Acidic residues predominate over residues 311–331; it reads GGEDSCESQESLKDEEADEAQ. Ser357 bears the Phosphoserine mark. Residues 358–368 are compositionally biased toward low complexity; it reads QEEALSSSAQS. Phosphoserine is present on residues Ser380, Ser392, Ser420, Ser422, Ser424, Ser430, Ser435, Ser439, and Ser443.

In terms of assembly, homodimer. Interacts with BIN1. Interacts with ARHGEF6 (via SH3 domain), ARHGEF7 (via SH3 domain), SH3GL1, SH3GL2 and SH3GL3. Identified in a complex with ARHGEF6 and GIT2.

The protein resides in the cytoplasm. It localises to the cell projection. The protein localises to the podosome membrane. Its subcellular location is the cell cortex. It is found in the phagocytic cup. In terms of biological role, promotes cell motility and migration, probably via its interaction with the cell membrane and with podosome proteins that mediate interaction with the cytoskeleton. Modulates membrane curvature and mediates membrane tubulation. Inhibits phagocytosis. Plays a role in podosome formation. The polypeptide is Bridging integrator 2 (Bin2) (Mus musculus (Mouse)).